The sequence spans 434 residues: Trigger factor (434 aa).

One can recognise a PPIase FKBP-type domain in the interval 161–246; that stretch reads EDRVTVDFNG…LKKVEERELP (86 aa).

Belongs to the FKBP-type PPIase family. Tig subfamily.

It localises to the cytoplasm. The enzyme catalyses [protein]-peptidylproline (omega=180) = [protein]-peptidylproline (omega=0). In terms of biological role, involved in protein export. Acts as a chaperone by maintaining the newly synthesized protein in an open conformation. Functions as a peptidyl-prolyl cis-trans isomerase. This is Trigger factor from Proteus mirabilis (strain HI4320).